The primary structure comprises 1368 residues: MHYSFTEKKRIRKSFAKRANVHNVPFLLATQLESYHGFLQEDKIPSQRKNEGLQSAFTSIFPIVSHNGFARLEFLSYVLGDPPFNIKECQQRGLTYASPLRAKVRLVILDKESPTKPVVKEMKEQEVYMGELPLMTSTGSFVINGTERVIVSQLHRSPGVFFEHDRGKTHSSGKLLFSARIIPYRGSWLDYEFDPKDILFFRVDRRRKMPVTILLKAIGMTPEQILENFFVFDDFALHADGAEMAFVAERLRGEVARFDITDKAGKVLVAKDKRINSKHVRDVEAAGIKNISVPEDYLLGRILAKNIVDKETGEVIANANDELTEDLLARLREGKVTHIQTLYTNDLDQGGYISQTLRMDDTTDQMAAKVAIYRMMRPGEPPTEDSVEALFNGLFYNADRYDLSAVGRMKFNRRIGRDELTGDMTLSNDDVLAVIKILVELRNGRGEVDDIDHLGNRRVRCVGELAENQFRAGLVRVERAVKERLGQAEADNLMPHDLINSKPISAAIREFFGSSQLSQFMDQTNPLSEITHKRRVSALGPGGLTRERAGFEVRDVHPTHYGRVCPIETPEGPNIGLINSLALYARLNEYGFLETPYRKVEGSKITDQIDYLSAIEEGRYIIAQANATIDKSGALSDELVSAREAGETILVSPERVQYMDVAPGQVVSVAASLIPFLEHDDANRALMGANMQRQAVPCLRPEKAFVGTGIERTVAVDSGTTVQALRGGIVDYIDAGRVVIRVNDDEAQAGEVGVDIYNLIKYTRSNQNTNINQRPIVQVGDRVAKHDVIADGASTDLGELALGQNMLVAFMPWNGYNFEDSILISEKVVADDRYTSIHIEELSVVARDTKLGAEEITRDISNLAENQLARLDESGIVYIGAEVTAGDTLVGKVTPKGETQLTPEEKLLRAIFGEKASDVKDTSLRVPSGMVGTVIDVQVFTREGIPRDKRAQQIIDDELQRYRLDLNDQLRIVEGDAFQRLEKMLIGKVVNGGPKKIAKGAKITKEYLDDLDKYHWFDIRPADDTSANALEAIKESIAEKRHQFDLAFEEKRKKLTQGDELPPGVQKMVKVYLAVKRRLQPGDKMAGRHGNKGVVSRILPIEDMPHMADGTPADVVLNPLGVPSRMNVGQVLEVHLGWAAKGLGLRIGEMLNAQVQIAELRKFLAAIYNESGKTEDLDSFSDAEILELAGNLKNGVPFATPVFDGADEGETRRMLDLAYPDHIAKQLGMTASKNQVTMYDGRTGEAFERTVTVGYMHYLKLHHLVDDKMHARSTGPYSLVTQQPLGGKAQFGGQRFGEMEVWALEAYGASYVLQEMLTVKSDDVNGRTKVYENLVKGDHVIDAGMPESFNVLVKEIRSLGIDIDLERD.

It belongs to the RNA polymerase beta chain family. In terms of assembly, the RNAP catalytic core consists of 2 alpha, 1 beta, 1 beta' and 1 omega subunit. When a sigma factor is associated with the core the holoenzyme is formed, which can initiate transcription.

It carries out the reaction RNA(n) + a ribonucleoside 5'-triphosphate = RNA(n+1) + diphosphate. Its function is as follows. DNA-dependent RNA polymerase catalyzes the transcription of DNA into RNA using the four ribonucleoside triphosphates as substrates. In Janthinobacterium sp. (strain Marseille) (Minibacterium massiliensis), this protein is DNA-directed RNA polymerase subunit beta.